We begin with the raw amino-acid sequence, 83 residues long: Cytochrome b559 subunit alpha (83 aa).

The chain crosses the membrane as a helical span at residues 21–35; it reads VIHSITIPSLFIAGW. A heme-binding site is contributed by His-23.

Belongs to the PsbE/PsbF family. As to quaternary structure, heterodimer of an alpha subunit and a beta subunit. PSII is composed of 1 copy each of membrane proteins PsbA, PsbB, PsbC, PsbD, PsbE, PsbF, PsbH, PsbI, PsbJ, PsbK, PsbL, PsbM, PsbT, PsbX, PsbY, PsbZ, Psb30/Ycf12, at least 3 peripheral proteins of the oxygen-evolving complex and a large number of cofactors. It forms dimeric complexes. The cofactor is heme b.

It is found in the plastid. The protein resides in the chloroplast thylakoid membrane. This b-type cytochrome is tightly associated with the reaction center of photosystem II (PSII). PSII is a light-driven water:plastoquinone oxidoreductase that uses light energy to abstract electrons from H(2)O, generating O(2) and a proton gradient subsequently used for ATP formation. It consists of a core antenna complex that captures photons, and an electron transfer chain that converts photonic excitation into a charge separation. The chain is Cytochrome b559 subunit alpha from Psilotum nudum (Whisk fern).